We begin with the raw amino-acid sequence, 117 residues long: Ribonuclease P protein component (117 aa).

The protein belongs to the RnpA family. As to quaternary structure, consists of a catalytic RNA component (M1 or rnpB) and a protein subunit.

The catalysed reaction is Endonucleolytic cleavage of RNA, removing 5'-extranucleotides from tRNA precursor.. In terms of biological role, RNaseP catalyzes the removal of the 5'-leader sequence from pre-tRNA to produce the mature 5'-terminus. It can also cleave other RNA substrates such as 4.5S RNA. The protein component plays an auxiliary but essential role in vivo by binding to the 5'-leader sequence and broadening the substrate specificity of the ribozyme. The protein is Ribonuclease P protein component of Desulforapulum autotrophicum (strain ATCC 43914 / DSM 3382 / VKM B-1955 / HRM2) (Desulfobacterium autotrophicum).